The sequence spans 313 residues: E3 ubiquitin-protein ligase siah2 (313 aa).

The tract at residues 1 to 49 is disordered; the sequence is MSRPSSAGPCASKPCGKQKQPPPPPPHAPSLPATISGGPGASAPPAPTA. A compositionally biased stretch (pro residues) spans 20–29; it reads QPPPPPPHAP. Residues 69–104 form an RING-type zinc finger; that stretch reads CPVCFDYVLPPILQCQAGHLVCNQCRQKLSCCPTCR. Residues 119–311 form an SBD region; the sequence is VASAVLFPCK…LGINVTISTC (193 aa). The SIAH-type zinc finger occupies 122–182; it reads AVLFPCKYAS…VMQHLTHSHK (61 aa). Zn(2+) is bound by residues Cys127, Cys134, His146, Cys150, Cys157, Cys164, His176, and His181.

The protein belongs to the SINA (Seven in absentia) family. In terms of assembly, homodimer. As to expression, widely expressed in early embryos until stage 40. It is then expressed in brain, spinal cord and in the developing and mature eye.

It is found in the cytoplasm. The enzyme catalyses S-ubiquitinyl-[E2 ubiquitin-conjugating enzyme]-L-cysteine + [acceptor protein]-L-lysine = [E2 ubiquitin-conjugating enzyme]-L-cysteine + N(6)-ubiquitinyl-[acceptor protein]-L-lysine.. The protein operates within protein modification; protein ubiquitination. Functionally, E3 ubiquitin-protein ligase that mediates ubiquitination and subsequent proteasomal degradation of target proteins. E3 ubiquitin ligases accept ubiquitin from an E2 ubiquitin-conjugating enzyme in the form of a thioester and then directly transfers the ubiquitin to targeted substrates. Involved in eye morphogenesis, probably triggers the ubiquitin-mediated degradation of different substrates. May play a role in the regulation of the cellular clock function. The protein is E3 ubiquitin-protein ligase siah2 (siah2) of Xenopus laevis (African clawed frog).